A 494-amino-acid polypeptide reads, in one-letter code: UPF0371 protein STER_1332 (494 aa).

Belongs to the UPF0371 family.

In Streptococcus thermophilus (strain ATCC BAA-491 / LMD-9), this protein is UPF0371 protein STER_1332.